The following is a 236-amino-acid chain: Phosphatidylserine decarboxylase proenzyme (236 aa).

Residue serine 203 is the Schiff-base intermediate with substrate; via pyruvic acid of the active site. Position 203 is a pyruvic acid (Ser); by autocatalysis (serine 203).

It belongs to the phosphatidylserine decarboxylase family. PSD-A subfamily. In terms of assembly, heterodimer of a large membrane-associated beta subunit and a small pyruvoyl-containing alpha subunit. Requires pyruvate as cofactor. In terms of processing, is synthesized initially as an inactive proenzyme. Formation of the active enzyme involves a self-maturation process in which the active site pyruvoyl group is generated from an internal serine residue via an autocatalytic post-translational modification. Two non-identical subunits are generated from the proenzyme in this reaction, and the pyruvate is formed at the N-terminus of the alpha chain, which is derived from the carboxyl end of the proenzyme. The post-translation cleavage follows an unusual pathway, termed non-hydrolytic serinolysis, in which the side chain hydroxyl group of the serine supplies its oxygen atom to form the C-terminus of the beta chain, while the remainder of the serine residue undergoes an oxidative deamination to produce ammonia and the pyruvoyl prosthetic group on the alpha chain.

It is found in the cell membrane. It carries out the reaction a 1,2-diacyl-sn-glycero-3-phospho-L-serine + H(+) = a 1,2-diacyl-sn-glycero-3-phosphoethanolamine + CO2. The protein operates within phospholipid metabolism; phosphatidylethanolamine biosynthesis; phosphatidylethanolamine from CDP-diacylglycerol: step 2/2. Its function is as follows. Catalyzes the formation of phosphatidylethanolamine (PtdEtn) from phosphatidylserine (PtdSer). In Saccharopolyspora erythraea (strain ATCC 11635 / DSM 40517 / JCM 4748 / NBRC 13426 / NCIMB 8594 / NRRL 2338), this protein is Phosphatidylserine decarboxylase proenzyme.